We begin with the raw amino-acid sequence, 503 residues long: Probable cytosol aminopeptidase (503 aa).

Mn(2+)-binding residues include K272 and D277. Residue K284 is part of the active site. Mn(2+) is bound by residues D295, D354, and E356. Residue R358 is part of the active site.

This sequence belongs to the peptidase M17 family. It depends on Mn(2+) as a cofactor.

Its subcellular location is the cytoplasm. The enzyme catalyses Release of an N-terminal amino acid, Xaa-|-Yaa-, in which Xaa is preferably Leu, but may be other amino acids including Pro although not Arg or Lys, and Yaa may be Pro. Amino acid amides and methyl esters are also readily hydrolyzed, but rates on arylamides are exceedingly low.. It catalyses the reaction Release of an N-terminal amino acid, preferentially leucine, but not glutamic or aspartic acids.. Its function is as follows. Presumably involved in the processing and regular turnover of intracellular proteins. Catalyzes the removal of unsubstituted N-terminal amino acids from various peptides. The protein is Probable cytosol aminopeptidase of Chlorobium limicola (strain DSM 245 / NBRC 103803 / 6330).